Consider the following 287-residue polypeptide: Phosphoribosylaminoimidazole-succinocarboxamide synthase (287 aa).

Belongs to the SAICAR synthetase family.

It carries out the reaction 5-amino-1-(5-phospho-D-ribosyl)imidazole-4-carboxylate + L-aspartate + ATP = (2S)-2-[5-amino-1-(5-phospho-beta-D-ribosyl)imidazole-4-carboxamido]succinate + ADP + phosphate + 2 H(+). Its pathway is purine metabolism; IMP biosynthesis via de novo pathway; 5-amino-1-(5-phospho-D-ribosyl)imidazole-4-carboxamide from 5-amino-1-(5-phospho-D-ribosyl)imidazole-4-carboxylate: step 1/2. The sequence is that of Phosphoribosylaminoimidazole-succinocarboxamide synthase from Neisseria meningitidis serogroup B (strain ATCC BAA-335 / MC58).